Here is a 228-residue protein sequence, read N- to C-terminus: UPF0173 metal-dependent hydrolase PTH_1415 (228 aa).

This sequence belongs to the UPF0173 family.

The sequence is that of UPF0173 metal-dependent hydrolase PTH_1415 from Pelotomaculum thermopropionicum (strain DSM 13744 / JCM 10971 / SI).